Reading from the N-terminus, the 346-residue chain is Phosphoribosylformylglycinamidine cyclo-ligase (346 aa).

This sequence belongs to the AIR synthase family.

The protein resides in the cytoplasm. It carries out the reaction 2-formamido-N(1)-(5-O-phospho-beta-D-ribosyl)acetamidine + ATP = 5-amino-1-(5-phospho-beta-D-ribosyl)imidazole + ADP + phosphate + H(+). The protein operates within purine metabolism; IMP biosynthesis via de novo pathway; 5-amino-1-(5-phospho-D-ribosyl)imidazole from N(2)-formyl-N(1)-(5-phospho-D-ribosyl)glycinamide: step 2/2. This chain is Phosphoribosylformylglycinamidine cyclo-ligase, found in Proteus mirabilis (strain HI4320).